Consider the following 578-residue polypeptide: Zinc finger-containing ubiquitin peptidase 1 (578 aa).

Residues 2–24 (LSCDICGETVTSEPDMKAHLIVH) form a C2H2-type 1 zinc finger. The C2H2-type 2; atypical zinc-finger motif lies at 29-52 (IVCPFCKLSGVSYDEMCFHIETAH). 2 consecutive C2H2-type zinc fingers follow at residues 154–177 (PECPFCGKIEEHSEDMETHVKTTH) and 193–215 (YDCPMCGLICTNYHILQEHVDLH). An MIU region spans residues 226-248 (DRVQCSGDLQLAHQLQQEEDRKR). Residues 249-274 (RSEESRQEIEEFQKLQRQYGLDNSGG) form a zUBD/ZHA region. An N6-acetyllysine modification is found at Lys-262. Catalysis depends on Cys-360, which acts as the Nucleophile. His-491 serves as the catalytic Proton acceptor. Asp-512 is an active-site residue.

It belongs to the peptidase C78 family. ZUFSP subfamily. Interacts with RPA1 and RPA2.

The protein localises to the cytoplasm. The protein resides in the nucleus. It catalyses the reaction Thiol-dependent hydrolysis of ester, thioester, amide, peptide and isopeptide bonds formed by the C-terminal Gly of ubiquitin (a 76-residue protein attached to proteins as an intracellular targeting signal).. Its function is as follows. Deubiquitinase with endodeubiquitinase activity that specifically interacts with and cleaves 'Lys-63'-linked long polyubiquitin chains. Shows only weak activity against 'Lys-11' and 'Lys-48'-linked chains. Plays an important role in genome stability pathways, functioning to prevent spontaneous DNA damage and also promote cellular survival in response to exogenous DNA damage. Modulates the ubiquitination status of replication protein A (RPA) complex proteins in response to replication stress. In Macaca fascicularis (Crab-eating macaque), this protein is Zinc finger-containing ubiquitin peptidase 1.